The following is a 380-amino-acid chain: Genome polyprotein (380 aa).

Disordered regions lie at residues Gly-54–Ile-154 and Gly-349–His-380. A compositionally biased stretch (low complexity) spans Gln-67–Gly-84. Composition is skewed to gly residues over residues Ala-85 to Gly-99 and Ser-106 to Ser-123. A compositionally biased stretch (low complexity) spans Asn-129–Gly-140.

The protein belongs to the potyviridae genome polyprotein family. Genome polyprotein of potyviruses undergoes post-translational proteolytic processing by the main proteinase NIa-pro resulting in the production of at least ten individual proteins. The P1 proteinase and the HC-pro cleave only their respective C-termini autocatalytically. 6K1 is essential for proper proteolytic separation of P3 from CI.

It is found in the virion. It carries out the reaction RNA(n) + a ribonucleoside 5'-triphosphate = RNA(n+1) + diphosphate. Functionally, an RNA-dependent RNA polymerase that plays an essential role in the virus replication. In terms of biological role, involved in aphid transmission, cell-to-cell and systemis movement, encapsidation of the viral RNA and in the regulation of viral RNA amplification. The chain is Genome polyprotein from Sorghum halepense (Johnson grass).